The sequence spans 424 residues: Proline--tRNA ligase (424 aa).

This sequence belongs to the class-II aminoacyl-tRNA synthetase family. ProS type 2 subfamily. Homodimer.

The protein resides in the cytoplasm. The enzyme catalyses tRNA(Pro) + L-proline + ATP = L-prolyl-tRNA(Pro) + AMP + diphosphate. In terms of biological role, catalyzes the attachment of proline to tRNA(Pro) in a two-step reaction: proline is first activated by ATP to form Pro-AMP and then transferred to the acceptor end of tRNA(Pro). This is Proline--tRNA ligase from Ehrlichia canis (strain Jake).